Reading from the N-terminus, the 426-residue chain is Glutamate-1-semialdehyde 2,1-aminomutase (426 aa).

Lys265 carries the post-translational modification N6-(pyridoxal phosphate)lysine.

The protein belongs to the class-III pyridoxal-phosphate-dependent aminotransferase family. HemL subfamily. Homodimer. It depends on pyridoxal 5'-phosphate as a cofactor.

It localises to the cytoplasm. The catalysed reaction is (S)-4-amino-5-oxopentanoate = 5-aminolevulinate. It functions in the pathway porphyrin-containing compound metabolism; protoporphyrin-IX biosynthesis; 5-aminolevulinate from L-glutamyl-tRNA(Glu): step 2/2. The chain is Glutamate-1-semialdehyde 2,1-aminomutase from Salmonella heidelberg (strain SL476).